The primary structure comprises 437 residues: ATP-dependent RNA helicase SUB2 (437 aa).

The segment covering 1–19 (MSHEAEEDLLEYSDNEQEV) has biased composition (acidic residues). The interval 1–45 (MSHEAEEDLLEYSDNEQEVQVDNKATEVNAEGNGESQAKDSDKKG) is disordered. The short motif at 53–81 (TGFKDFLLKPELSRAIIDCGFEHPSEVQQ) is the Q motif element. The Helicase ATP-binding domain occupies 84 to 259 (IPQSIHGTDV…RRFLQNPLEI (176 aa)). 97–104 (AKSGLGKT) provides a ligand contact to ATP. A DECD box motif is present at residues 206–209 (DECD). Residues 287–432 (KLAQLLDDLE…EFPEEGVDPS (146 aa)) form the Helicase C-terminal domain.

This sequence belongs to the DEAD box helicase family. DECD subfamily.

It localises to the nucleus. It carries out the reaction ATP + H2O = ADP + phosphate + H(+). Functionally, ATP-binding RNA helicase involved in transcription elongation and required for the export of mRNA out of the nucleus. SUB2 also plays a role in pre-mRNA splicing and spliceosome assembly. May be involved in rDNA and telomeric silencing, and maintenance of genome integrity. The sequence is that of ATP-dependent RNA helicase SUB2 (SUB2) from Kluyveromyces lactis (strain ATCC 8585 / CBS 2359 / DSM 70799 / NBRC 1267 / NRRL Y-1140 / WM37) (Yeast).